Reading from the N-terminus, the 308-residue chain is Phenylcoumaran benzylic ether reductase PT1 (308 aa).

Residues 11 to 17 (GATGYIG), R36, and K46 contribute to the NADP(+) site. Residue K134 is the Proton acceptor of the active site. Residue R138 coordinates NADP(+).

It belongs to the NmrA-type oxidoreductase family. Isoflavone reductase subfamily.

It catalyses the reaction (-)-dehydrodiconiferyl alcohol + NADPH + H(+) = (S)-isodihydrodehydrodiconiferyl alcohol + NADP(+). The enzyme catalyses (+)-dehydrodiconiferyl alcohol + NADPH + H(+) = (R)-isodihydrodehydrodiconiferyl alcohol + NADP(+). It carries out the reaction (2R,3S)-dihydrodehydrodiconiferyl alcohol + NADPH + H(+) = (S)-tetrahydrodehydrodiconiferyl alcohol + NADP(+). The catalysed reaction is (2S,3R)-dihydrodehydrodiconiferyl alcohol + NADPH + H(+) = (R)-tetrahydrodehydrodiconiferyl alcohol + NADP(+). Oxidoreductase involved in lignan biosynthesis. Catalyzes the NADPH-dependent reduction of phenylcoumaran benzylic ethers. Converts dehydrodiconiferyl alcohol (DDC) to isodihydrodehydrodiconiferyl alcohol (IDDDC), and dihydrodehydrodiconiferyl alcohol (DDDC) to tetrahydrodehydrodiconiferyl alcohol (TDDC). This chain is Phenylcoumaran benzylic ether reductase PT1, found in Pinus taeda (Loblolly pine).